Here is a 475-residue protein sequence, read N- to C-terminus: MDLFLYNTLSREKERFLPSNDPVKLYTCGPTVYDYAHIGNFRTYVFEDLLKRVLLFLGYSVHHVMNITDVDDKTLAGARKKGCSLEKYCQPYINAFFADLETLHILKADAYPHATHYIPQMIEAIQQLIDQGIAYVGQDQSVYFSISRFPNYGSLSHLNLEELRQSSRIDADEYDKDNLCDFVLWKAYDPNRDGEIFWESPFGKGRPGWHLECSIMSMALLGQSLDIHAGGVDNIFPHHENEIAQSESLSRKPFVRYWLHSHHLLVDGKKMSKSLGNFFTLRDLLQQGFSGEEVRYLLLQGHYRTQLNFTQEGLQAARQSLKRLRDFISRLEDPFYPDDIIHPEVGSACQNFLEAFVTSITNDLNISSALASLFDFIRKINGMIDRQSIQEETSSEFSKQDAQHILSLLRQIDQVLGVLPFSQADIPEDVLLLVKEREAARKVKNWKEADRLRDEIISRGFAIEDGKTGMKVKKI.

Cys28 lines the Zn(2+) pocket. The 'HIGH' region motif lies at 30–40 (PTVYDYAHIGN). The Zn(2+) site is built by Cys213, His238, and Glu242. The 'KMSKS' region motif lies at 270–274 (KMSKS). Position 273 (Lys273) interacts with ATP.

Belongs to the class-I aminoacyl-tRNA synthetase family. In terms of assembly, monomer. Requires Zn(2+) as cofactor.

Its subcellular location is the cytoplasm. The enzyme catalyses tRNA(Cys) + L-cysteine + ATP = L-cysteinyl-tRNA(Cys) + AMP + diphosphate. The polypeptide is Cysteine--tRNA ligase (cysS) (Chlamydia muridarum (strain MoPn / Nigg)).